Consider the following 106-residue polypeptide: UPF0145 protein MA_3383 (106 aa).

Belongs to the UPF0145 family.

This Methanosarcina acetivorans (strain ATCC 35395 / DSM 2834 / JCM 12185 / C2A) protein is UPF0145 protein MA_3383.